A 189-amino-acid polypeptide reads, in one-letter code: Interferon alpha-1/13 (189 aa).

Positions 1-23 are cleaved as a signal peptide; sequence MASPFALLMVLVVLSCKSSCSLG. 2 disulfides stabilise this stretch: C24–C122 and C52–C162.

Belongs to the alpha/beta interferon family. Interacts with CR2.

It localises to the secreted. Functionally, produced by macrophages, IFN-alpha have antiviral activities. Interferon stimulates the production of two enzymes: a protein kinase and an oligoadenylate synthetase. This is Interferon alpha-1/13 (IFNA1) from Homo sapiens (Human).